The sequence spans 305 residues: Putative F-box protein PP2-B8 (305 aa).

The region spanning 33-79 (VAELDDLPEECVSIIVSFTSPQDACVLASVSKTFASAVKSDIVWEKF) is the F-box domain.

The sequence is that of Putative F-box protein PP2-B8 (PP2B8) from Arabidopsis thaliana (Mouse-ear cress).